We begin with the raw amino-acid sequence, 156 residues long: SsrA-binding protein (156 aa).

Residues 135 to 150 (KRDTIKDREWQRDRSR) show a composition bias toward basic and acidic residues. The disordered stretch occupies residues 135–156 (KRDTIKDREWQRDRSRIMKKNT).

This sequence belongs to the SmpB family.

Its subcellular location is the cytoplasm. Its function is as follows. Required for rescue of stalled ribosomes mediated by trans-translation. Binds to transfer-messenger RNA (tmRNA), required for stable association of tmRNA with ribosomes. tmRNA and SmpB together mimic tRNA shape, replacing the anticodon stem-loop with SmpB. tmRNA is encoded by the ssrA gene; the 2 termini fold to resemble tRNA(Ala) and it encodes a 'tag peptide', a short internal open reading frame. During trans-translation Ala-aminoacylated tmRNA acts like a tRNA, entering the A-site of stalled ribosomes, displacing the stalled mRNA. The ribosome then switches to translate the ORF on the tmRNA; the nascent peptide is terminated with the 'tag peptide' encoded by the tmRNA and targeted for degradation. The ribosome is freed to recommence translation, which seems to be the essential function of trans-translation. The protein is SsrA-binding protein of Legionella pneumophila (strain Paris).